Here is a 175-residue protein sequence, read N- to C-terminus: Large ribosomal subunit protein uL10 (175 aa).

This sequence belongs to the universal ribosomal protein uL10 family. In terms of assembly, part of the ribosomal stalk of the 50S ribosomal subunit. The N-terminus interacts with L11 and the large rRNA to form the base of the stalk. The C-terminus forms an elongated spine to which L12 dimers bind in a sequential fashion forming a multimeric L10(L12)X complex.

Forms part of the ribosomal stalk, playing a central role in the interaction of the ribosome with GTP-bound translation factors. This Prochlorococcus marinus (strain NATL1A) protein is Large ribosomal subunit protein uL10.